Reading from the N-terminus, the 223-residue chain is MNSWTEAIGEEKVQPYFQQLLQQVYQARASGKIIYPPQHEVFSAFALTDFKAVKVVILGQDPYHGPNQAHGLAFSVKPSVVPPPSLVNIYKELAQDIAGFQVPSHGYLIDWAKQGVLLLNTVLTVQQGMAHSHATLGWEIFTDKVIAQLNDHRENLVFLLWGSHAQKKGQFINRSRHCVLTAPHPSPLSAHRGFFGCQHFSKANAYLQSKGIATINWQLPLVV.

Asp-61 serves as the catalytic Proton acceptor.

It belongs to the uracil-DNA glycosylase (UDG) superfamily. UNG family.

The protein localises to the cytoplasm. It carries out the reaction Hydrolyzes single-stranded DNA or mismatched double-stranded DNA and polynucleotides, releasing free uracil.. Functionally, excises uracil residues from the DNA which can arise as a result of misincorporation of dUMP residues by DNA polymerase or due to deamination of cytosine. This chain is Uracil-DNA glycosylase, found in Haemophilus ducreyi (strain 35000HP / ATCC 700724).